We begin with the raw amino-acid sequence, 159 residues long: Gigasin-1 (159 aa).

Disordered stretches follow at residues 1–33 and 80–159; these read GKATTKKVEIPERDRYDNGYDNHGHDDFEHDQT and KESY…KYRR.

In terms of tissue distribution, component of the organic matrix of calcified shell layers.

This is Gigasin-1 from Magallana gigas (Pacific oyster).